Reading from the N-terminus, the 307-residue chain is Elongation factor Ts (307 aa).

An involved in Mg(2+) ion dislocation from EF-Tu region spans residues 80 to 83 (TDFV).

The protein belongs to the EF-Ts family.

The protein resides in the cytoplasm. Its function is as follows. Associates with the EF-Tu.GDP complex and induces the exchange of GDP to GTP. It remains bound to the aminoacyl-tRNA.EF-Tu.GTP complex up to the GTP hydrolysis stage on the ribosome. This chain is Elongation factor Ts, found in Methylobacterium nodulans (strain LMG 21967 / CNCM I-2342 / ORS 2060).